A 285-amino-acid polypeptide reads, in one-letter code: Polyamine aminopropyltransferase (285 aa).

The PABS domain maps to 5–238; that stretch reads EMWYETLHTG…GIMTFAWASD (234 aa). S-methyl-5'-thioadenosine is bound at residue Gln33. Residues His64 and Asp88 each coordinate spermidine. Residues Glu108 and 140 to 141 each bind S-methyl-5'-thioadenosine; that span reads DG. Asp158 acts as the Proton acceptor in catalysis. Spermidine is bound at residue 158–161; that stretch reads DCTD. Pro165 is a binding site for S-methyl-5'-thioadenosine.

This sequence belongs to the spermidine/spermine synthase family. As to quaternary structure, homodimer or homotetramer.

It localises to the cytoplasm. The catalysed reaction is S-adenosyl 3-(methylsulfanyl)propylamine + putrescine = S-methyl-5'-thioadenosine + spermidine + H(+). It functions in the pathway amine and polyamine biosynthesis; spermidine biosynthesis; spermidine from putrescine: step 1/1. Functionally, catalyzes the irreversible transfer of a propylamine group from the amino donor S-adenosylmethioninamine (decarboxy-AdoMet) to putrescine (1,4-diaminobutane) to yield spermidine. This chain is Polyamine aminopropyltransferase, found in Erwinia tasmaniensis (strain DSM 17950 / CFBP 7177 / CIP 109463 / NCPPB 4357 / Et1/99).